We begin with the raw amino-acid sequence, 467 residues long: uncharacterized protein (467 aa).

This is an uncharacterized protein from Acanthamoeba polyphaga (Amoeba).